The following is a 729-amino-acid chain: Phosphoribosylformylglycinamidine synthase subunit PurL (729 aa).

H42 is an active-site residue. The ATP site is built by Y45 and K84. E86 serves as a coordination point for Mg(2+). Substrate-binding positions include 87 to 90 (SHNH) and R109. H88 functions as the Proton acceptor in the catalytic mechanism. D110 contacts Mg(2+). Q238 contacts substrate. Residue D266 coordinates Mg(2+). 310–312 (ESQ) is a substrate binding site. ATP is bound by residues D492 and G529. Residue N530 participates in Mg(2+) binding. S532 lines the substrate pocket.

Belongs to the FGAMS family. In terms of assembly, monomer. Part of the FGAM synthase complex composed of 1 PurL, 1 PurQ and 2 PurS subunits.

The protein resides in the cytoplasm. It carries out the reaction N(2)-formyl-N(1)-(5-phospho-beta-D-ribosyl)glycinamide + L-glutamine + ATP + H2O = 2-formamido-N(1)-(5-O-phospho-beta-D-ribosyl)acetamidine + L-glutamate + ADP + phosphate + H(+). The protein operates within purine metabolism; IMP biosynthesis via de novo pathway; 5-amino-1-(5-phospho-D-ribosyl)imidazole from N(2)-formyl-N(1)-(5-phospho-D-ribosyl)glycinamide: step 1/2. In terms of biological role, part of the phosphoribosylformylglycinamidine synthase complex involved in the purines biosynthetic pathway. Catalyzes the ATP-dependent conversion of formylglycinamide ribonucleotide (FGAR) and glutamine to yield formylglycinamidine ribonucleotide (FGAM) and glutamate. The FGAM synthase complex is composed of three subunits. PurQ produces an ammonia molecule by converting glutamine to glutamate. PurL transfers the ammonia molecule to FGAR to form FGAM in an ATP-dependent manner. PurS interacts with PurQ and PurL and is thought to assist in the transfer of the ammonia molecule from PurQ to PurL. This is Phosphoribosylformylglycinamidine synthase subunit PurL from Campylobacter curvus (strain 525.92).